A 240-amino-acid chain; its full sequence is Ribonuclease P protein component 3 (240 aa).

The protein belongs to the eukaryotic/archaeal RNase P protein component 3 family. As to quaternary structure, consists of a catalytic RNA component and at least 4-5 protein subunits.

The protein resides in the cytoplasm. The enzyme catalyses Endonucleolytic cleavage of RNA, removing 5'-extranucleotides from tRNA precursor.. Its function is as follows. Part of ribonuclease P, a protein complex that generates mature tRNA molecules by cleaving their 5'-ends. The protein is Ribonuclease P protein component 3 of Halorubrum lacusprofundi (strain ATCC 49239 / DSM 5036 / JCM 8891 / ACAM 34).